Reading from the N-terminus, the 288-residue chain is MVILDGKLVSKQIKQTLKKQIDTYLNKNYKKPKLAVILIGNDPASELYVSNKIKACNLVGIESVLLRFGQNITSEMLSDQINQLNNDNSVDAILLQLPLPKHLDEQEFLQAIDPLKDVDGFHYINQGKMLEGYDTIYPCTPIGIINLLKAYNIDVRSKDITIIGTSNIVGKPLAIMLSNMGATISMCNKNTKSLKKYTKRSDIVISTTGKQALIKKDMIKKNAIVIDVGIIKDPITNKIVGDVDFENVKELCSYITPVPGGVGPMTVSMLLENTFKLYKLHIKENYEN.

Residues 164 to 166 (GTS) and Ile-230 contribute to the NADP(+) site.

This sequence belongs to the tetrahydrofolate dehydrogenase/cyclohydrolase family. Homodimer.

It catalyses the reaction (6R)-5,10-methylene-5,6,7,8-tetrahydrofolate + NADP(+) = (6R)-5,10-methenyltetrahydrofolate + NADPH. The catalysed reaction is (6R)-5,10-methenyltetrahydrofolate + H2O = (6R)-10-formyltetrahydrofolate + H(+). It participates in one-carbon metabolism; tetrahydrofolate interconversion. Its function is as follows. Catalyzes the oxidation of 5,10-methylenetetrahydrofolate to 5,10-methenyltetrahydrofolate and then the hydrolysis of 5,10-methenyltetrahydrofolate to 10-formyltetrahydrofolate. In Mycoplasma mycoides subsp. mycoides SC (strain CCUG 32753 / NCTC 10114 / PG1), this protein is Bifunctional protein FolD.